A 570-amino-acid polypeptide reads, in one-letter code: Serine/threonine-protein kinase STY17 (570 aa).

The interval 112–145 is disordered; it reads LNGNSGDVDPSDPAVNEDAQSSYNSRSLAPPTFG. Over residues 129-145 the composition is skewed to polar residues; that stretch reads DAQSSYNSRSLAPPTFG. The ACT domain maps to 180–260; the sequence is EITFSTIDRP…PCSKQKSITF (81 aa). In terms of domain architecture, Protein kinase spans 292 to 545; that stretch reads LKIEKKVACG…EIIEMLNQLI (254 aa). ATP contacts are provided by residues 298 to 306 and lysine 319; that span reads VACGSYGEL. Aspartate 413 acts as the Proton acceptor in catalysis. At serine 441 the chain carries Phosphoserine. A Phosphothreonine modification is found at threonine 445.

Belongs to the protein kinase superfamily. Ser/Thr protein kinase family. In terms of processing, autophosphorylated on serine and threonine residues. Autophosphorylated at Thr-445.

It localises to the cytoplasm. The protein resides in the cytosol. The catalysed reaction is L-seryl-[protein] + ATP = O-phospho-L-seryl-[protein] + ADP + H(+). It carries out the reaction L-threonyl-[protein] + ATP = O-phospho-L-threonyl-[protein] + ADP + H(+). Activated by autophosphorylation at Thr-445. Functionally, serine/threonine protein kinase that specifically phosphorylates chloroplast precursor proteins in the cytosol within the cleavable presequences (transit peptides). May be part of a cytosolic regulatory network involved in chloroplast protein import. Does not phosphorylate mitochondrion precursor proteins. Specific for ATP and does not utilize other NTPs. Plays a role in chloroplast biogenesis and differentiation in cotyledons, possibly through phosphorylation of chloroplast preproteins. The chain is Serine/threonine-protein kinase STY17 from Arabidopsis thaliana (Mouse-ear cress).